The following is a 138-amino-acid chain: Small ribosomal subunit protein uS11c (138 aa).

The interval 1–22 is disordered; sequence MAKPIPRIGSQRNRRINSRKNA. Residues 12–22 show a composition bias toward basic residues; it reads RNRRINSRKNA.

Belongs to the universal ribosomal protein uS11 family. In terms of assembly, part of the 30S ribosomal subunit.

It localises to the plastid. The protein localises to the chloroplast. The protein is Small ribosomal subunit protein uS11c of Fagopyrum esculentum subsp. ancestrale (Wild buckwheat).